Consider the following 455-residue polypeptide: Bifunctional protein GlmU (455 aa).

Residues 1 to 225 (MNIVILAAGL…EWETLGVNSK (225 aa)) form a pyrophosphorylase region. UDP-N-acetyl-alpha-D-glucosamine contacts are provided by residues 6 to 9 (LAAG), Lys-20, Gln-71, 76 to 77 (GT), 98 to 100 (YGD), Gly-135, Glu-150, Asn-165, and Asn-223. Asp-100 contributes to the Mg(2+) binding site. Mg(2+) is bound at residue Asn-223. The linker stretch occupies residues 226–246 (VQLAELERIHQRNLAQQLLED). The interval 247–455 (GVTLIDPARI…QRPVKQKKDA (209 aa)) is N-acetyltransferase. Positions 329 and 347 each coordinate UDP-N-acetyl-alpha-D-glucosamine. His-359 serves as the catalytic Proton acceptor. Tyr-362 and Asn-373 together coordinate UDP-N-acetyl-alpha-D-glucosamine. Acetyl-CoA is bound by residues Ala-376, 382 to 383 (NY), Ser-401, Ala-419, and Arg-436.

It in the N-terminal section; belongs to the N-acetylglucosamine-1-phosphate uridyltransferase family. In the C-terminal section; belongs to the transferase hexapeptide repeat family. Homotrimer. The cofactor is Mg(2+).

The protein resides in the cytoplasm. The enzyme catalyses alpha-D-glucosamine 1-phosphate + acetyl-CoA = N-acetyl-alpha-D-glucosamine 1-phosphate + CoA + H(+). It catalyses the reaction N-acetyl-alpha-D-glucosamine 1-phosphate + UTP + H(+) = UDP-N-acetyl-alpha-D-glucosamine + diphosphate. It functions in the pathway nucleotide-sugar biosynthesis; UDP-N-acetyl-alpha-D-glucosamine biosynthesis; N-acetyl-alpha-D-glucosamine 1-phosphate from alpha-D-glucosamine 6-phosphate (route II): step 2/2. Its pathway is nucleotide-sugar biosynthesis; UDP-N-acetyl-alpha-D-glucosamine biosynthesis; UDP-N-acetyl-alpha-D-glucosamine from N-acetyl-alpha-D-glucosamine 1-phosphate: step 1/1. It participates in bacterial outer membrane biogenesis; LPS lipid A biosynthesis. Catalyzes the last two sequential reactions in the de novo biosynthetic pathway for UDP-N-acetylglucosamine (UDP-GlcNAc). The C-terminal domain catalyzes the transfer of acetyl group from acetyl coenzyme A to glucosamine-1-phosphate (GlcN-1-P) to produce N-acetylglucosamine-1-phosphate (GlcNAc-1-P), which is converted into UDP-GlcNAc by the transfer of uridine 5-monophosphate (from uridine 5-triphosphate), a reaction catalyzed by the N-terminal domain. The polypeptide is Bifunctional protein GlmU (Ralstonia nicotianae (strain ATCC BAA-1114 / GMI1000) (Ralstonia solanacearum)).